The sequence spans 587 residues: Tripartite motif-containing protein 29 (587 aa).

The interval 1-71 (MEGADACRSN…SGEGKSGLFS (71 aa)) is disordered. Phosphoserine is present on residues Ser-21, Ser-28, Ser-58, and Ser-104. Tyr-106 bears the Phosphotyrosine mark. The B box-type zinc finger occupies 220–260 (FEARKCPLHGKTMELFCQTDQTCICYLCMFQEHKNHSTVTV). Positions 225, 228, 247, and 252 each coordinate Zn(2+). Residues 259–348 (TVEEAKAEKE…AVDQVKVIVD (90 aa)) are a coiled coil. Thr-476 carries the phosphothreonine modification. Phosphoserine is present on Ser-489.

Interacts with VIM and HINT1. Interacts with IKBKG/NEMO. Interacts with STING1.

The protein resides in the cytoplasm. Its subcellular location is the lysosome. Its function is as follows. Plays a crucial role in the regulation of macrophage activation in response to viral or bacterial infections within the respiratory tract. Mechanistically, TRIM29 interacts with IKBKG/NEMO in the lysosome where it induces its 'Lys-48' ubiquitination and subsequent degradation. In turn, the expression of type I interferons and the production of pro-inflammatory cytokines are inhibited. Additionally, induces the 'Lys-48' ubiquitination of STING1 in a similar way, leading to its degradation. In Mus musculus (Mouse), this protein is Tripartite motif-containing protein 29 (Trim29).